Here is a 218-residue protein sequence, read N- to C-terminus: Molybdenum cofactor guanylyltransferase (218 aa).

GTP contacts are provided by residues 16–18 (LAG), K28, N56, D74, and D109. Position 109 (D109) interacts with Mg(2+).

Belongs to the MobA family. Monomer. Requires Mg(2+) as cofactor.

Its subcellular location is the cytoplasm. It catalyses the reaction Mo-molybdopterin + GTP + H(+) = Mo-molybdopterin guanine dinucleotide + diphosphate. Transfers a GMP moiety from GTP to Mo-molybdopterin (Mo-MPT) cofactor (Moco or molybdenum cofactor) to form Mo-molybdopterin guanine dinucleotide (Mo-MGD) cofactor. This chain is Molybdenum cofactor guanylyltransferase, found in Rhizobium meliloti (strain 1021) (Ensifer meliloti).